We begin with the raw amino-acid sequence, 634 residues long: MDKERISYHESVQKMYERIKADNMTNVWDRYEAQGIGGVPDRRCTFCMAGARCDLCSNGPCRSDASKDKRGVCGITADGMAMRMMLLRNVMGASTYHYHTDQTIRTLRETARNKTPYSIREPEKLKTFANRLGIDISGSDAEIALNLCEFVEKDFNRPAYEPSRIVEILAPPERKKRWEELGIFPGGIYGEMMLSTSSCLTNVDGYYVSLALKAMRLGIAMAYQSQIVNEYCQDVLFGIPRPHTMRVDLGVLDPEYVNVLPNGHEPFLGFAMVQLARKPEWQEKAKAAGAKGLRVIASIETGQEMIQRWEEDDVFYGFTGNWISQEAVLASRCVDLFAADMNCSLPVAPLYAEKYNFKLMPVSDLVAFEGIEERLNYDPVEAEEQAAKLLDMAVENFKNRNSSGEAALNFPAGEAVVGFSTESILDALGGTLDPLLDAIKSGAIKGVVGMVSCTTLRDYGQDVHSVAVVKELIKRNILVLSMGCGNAAMQVAGLCSPEAREYAGDSLKAVCEALGVPPVLSYGTCTDTGRLADLLGAISGALGGVPVPDLPVAAAAPEYMEQKATIDAIFALALGLYTYVNPVPTVTGAPNLVKLLTEDCREVTGGLLNVETDAVKAVDGIEQHIMEKRKKLGI.

[4Fe-4S] cluster is bound by residues cysteine 44, cysteine 53, cysteine 56, cysteine 61, and cysteine 73. [Ni-4Fe-5S] cluster-binding residues include histidine 264, cysteine 343, cysteine 453, cysteine 484, and cysteine 525.

Belongs to the Ni-containing carbon monoxide dehydrogenase family. Homodimer. The cofactor is [4Fe-4S] cluster. It depends on [Ni-4Fe-5S] cluster as a cofactor.

It catalyses the reaction CO + 2 oxidized [2Fe-2S]-[ferredoxin] + H2O = 2 reduced [2Fe-2S]-[ferredoxin] + CO2 + 2 H(+). CODH oxidizes carbon monoxide coupled, via CooF, to the reduction of a hydrogen cation by a hydrogenase (possibly CooH). The sequence is that of Carbon monoxide dehydrogenase 2 (cooS2) from Methanosarcina mazei (strain ATCC BAA-159 / DSM 3647 / Goe1 / Go1 / JCM 11833 / OCM 88) (Methanosarcina frisia).